Here is a 289-residue protein sequence, read N- to C-terminus: HTH-type transcriptional regulator SoxR (289 aa).

Positions 1–58 constitute an HTH lysR-type domain; sequence MEIKDLQIFQKVVEYGSVSKAAKSLNYVQSYVTVRIQKLEEELQTELFHRSSRGMVLN. The H-T-H motif DNA-binding region spans 18–37; it reads VSKAAKSLNYVQSYVTVRIQ.

This sequence belongs to the LysR transcriptional regulatory family.

Transcriptional repressor of soxA gene expression. This is HTH-type transcriptional regulator SoxR (soxR) from Arthrobacter sp. (strain TE1826).